Reading from the N-terminus, the 209-residue chain is NADH-ubiquinone oxidoreductase subunit 9 (209 aa).

It belongs to the complex I 30 kDa subunit family. In terms of assembly, complex I is composed of about 30 different subunits.

The protein resides in the mitochondrion inner membrane. It catalyses the reaction a ubiquinone + NADH + 5 H(+)(in) = a ubiquinol + NAD(+) + 4 H(+)(out). Core subunit of the mitochondrial membrane respiratory chain NADH dehydrogenase (Complex I) that is believed to belong to the minimal assembly required for catalysis. Complex I functions in the transfer of electrons from NADH to the respiratory chain. The immediate electron acceptor for the enzyme is believed to be ubiquinone. The polypeptide is NADH-ubiquinone oxidoreductase subunit 9 (nad9) (Dictyostelium citrinum (Slime mold)).